Here is a 71-residue protein sequence, read N- to C-terminus: Small ribosomal subunit protein bS21 (71 aa).

The tract at residues 43–71 is disordered; the sequence is TERKRAKASAVKRHAKKLARENARRTRLY. The segment covering 46-59 has biased composition (basic residues); sequence KRAKASAVKRHAKK. Positions 60–71 are enriched in basic and acidic residues; the sequence is LARENARRTRLY.

The protein belongs to the bacterial ribosomal protein bS21 family.

This chain is Small ribosomal subunit protein bS21, found in Pectobacterium atrosepticum (strain SCRI 1043 / ATCC BAA-672) (Erwinia carotovora subsp. atroseptica).